The primary structure comprises 1032 residues: Integrin alpha-4 (1032 aa).

The N-terminal stretch at 1-33 (MAWEARREPGPRRAAVRETVMLLLCLGVPTGRP) is a signal peptide. 7 FG-GAP repeats span residues 35–100 (NVDT…PGQT), 110–177 (NGEP…TELS), 185–237 (QDYV…KYKA), 238–291 (FLDK…EKEL), 292–351 (NILH…GAVM), 355–412 (ETNL…GISS), and 416–478 (QRIE…HPES). The Extracellular segment spans residues 35 to 977 (NVDTESALLY…HHQRPKRYFT (943 aa)). Asn-79 carries N-linked (GlcNAc...) asparagine glycosylation. A disulfide bridge connects residues Cys-91 and Cys-101. Asn-138 carries an N-linked (GlcNAc...) asparagine glycan. 2 disulfides stabilise this stretch: Cys-144–Cys-165 and Cys-183–Cys-198. N-linked (GlcNAc...) asparagine glycosylation occurs at Asn-229. Ca(2+) is bound by residues Asp-314, Asn-316, Asp-318, Asp-322, Asp-377, Asp-379, Asp-381, Asp-385, Asp-439, Asp-441, Asn-443, Tyr-445, and Asp-447. Asn-480 is a glycosylation site (N-linked (GlcNAc...) asparagine). Intrachain disulfides connect Cys-486-Cys-495 and Cys-501-Cys-557. N-linked (GlcNAc...) asparagine glycans are attached at residues Asn-518 and Asn-538. The short motif at 606 to 616 (KKEKDIMKKTI) is the SG1 element. An intrachain disulfide couples Cys-622 to Cys-627. N-linked (GlcNAc...) asparagine glycans are attached at residues Asn-626, Asn-645, and Asn-660. An intrachain disulfide couples Cys-698 to Cys-711. N-linked (GlcNAc...) asparagine glycosylation is found at Asn-806 and Asn-821. 2 disulfides stabilise this stretch: Cys-852–Cys-890 and Cys-897–Cys-902. A helical membrane pass occupies residues 978 to 1001 (IVIISSSLLLGLIVLLLISYVMWK). Over 1002 to 1032 (AGFFKRQYKSILQEENRRDSWSYINSKSNDD) the chain is Cytoplasmic. The GFFKR motif signature appears at 1003-1007 (GFFKR). Ser-1021 bears the Phosphoserine mark.

This sequence belongs to the integrin alpha chain family. Heterodimer of an alpha and a beta subunit. The alpha subunit can sometimes be cleaved into two non-covalently associated fragments. Alpha-4 associates with either beta-1 or beta-7. Alpha-4 interacts with PXN, LPXN, and TGFB1I1/HIC5. Interacts with CSPG4 through CSPG4 chondroitin sulfate glycosaminoglycan. Interacts with JAML; integrin alpha-4/beta-1 may regulate leukocyte to endothelial cells adhesion by controlling JAML homodimerization. ITGA4:ITGB1 is found in a ternary complex with CX3CR1 and CX3CL1. Interacts with MDK. ITGA4:ITGB1 interacts with MDK; this interaction mediates MDK-induced osteoblast cells migration through PXN phosphorylation. Integrin ITGA4:ITGB1 interacts with SVEP1 (via Sushi domain 21); thereby inhibits Ca(2+) intracellular signaling and as a result represses vasocontraction. ITGA4:ITGB1 interacts with SELP. ITGA4:ITGB1 interacts with BCAM. Phosphorylation on Ser-1027 inhibits PXN binding. As to expression, expressed in vascular smooth muscle cells (at protein level).

It is found in the membrane. Integrins alpha-4/beta-1 (VLA-4) and alpha-4/beta-7 are receptors for fibronectin. They recognize one or more domains within the alternatively spliced CS-1 and CS-5 regions of fibronectin. They are also receptors for VCAM1. Integrin alpha-4/beta-1 recognizes the sequence Q-I-D-S in VCAM1. Integrin alpha-4/beta-7 is also a receptor for MADCAM1. It recognizes the sequence L-D-T in MADCAM1. On activated endothelial cells integrin VLA-4 triggers homotypic aggregation for most VLA-4-positive leukocyte cell lines. It may also participate in cytolytic T-cell interactions with target cells. ITGA4:ITGB1 binds to fractalkine (CX3CL1) and may act as its coreceptor in CX3CR1-dependent fractalkine signaling. ITGA4:ITGB1 binds to PLA2G2A via a site (site 2) which is distinct from the classical ligand-binding site (site 1) and this induces integrin conformational changes and enhanced ligand binding to site 1. Integrin ITGA4:ITGB1 represses PRKCA-mediated L-type voltage-gated channel Ca(2+) influx and ROCK-mediated calcium sensitivity in vascular smooth muscle cells via its interaction with SVEP1, thereby inhibiting vasocontraction. The polypeptide is Integrin alpha-4 (ITGA4) (Homo sapiens (Human)).